The sequence spans 35 residues: Putative neurotoxin (35 aa).

The LCN-type CS-alpha/beta domain occupies 1-35 (KEGYPKNSEGCKITCLFNDPYCKGLCINLSTQADY).

In terms of tissue distribution, expressed by the venom gland.

It is found in the secreted. Causes paralysis and death in insects (A.domestica). The sequence is that of Putative neurotoxin from Rhopalurus junceus (Caribbean blue scorpion).